We begin with the raw amino-acid sequence, 126 residues long: Large ribosomal subunit protein bL12 (126 aa).

This sequence belongs to the bacterial ribosomal protein bL12 family. In terms of assembly, homodimer. Part of the ribosomal stalk of the 50S ribosomal subunit. Forms a multimeric L10(L12)X complex, where L10 forms an elongated spine to which 2 to 4 L12 dimers bind in a sequential fashion. Binds GTP-bound translation factors.

In terms of biological role, forms part of the ribosomal stalk which helps the ribosome interact with GTP-bound translation factors. Is thus essential for accurate translation. This is Large ribosomal subunit protein bL12 from Bifidobacterium longum (strain DJO10A).